The sequence spans 148 residues: NADPH-dependent 7-cyano-7-deazaguanine reductase (148 aa).

The Thioimide intermediate role is filled by C50. Catalysis depends on D57, which acts as the Proton donor. Substrate-binding positions include 72 to 74 (VES) and 91 to 92 (HE).

Belongs to the GTP cyclohydrolase I family. QueF type 1 subfamily.

It is found in the cytoplasm. It carries out the reaction 7-aminomethyl-7-carbaguanine + 2 NADP(+) = 7-cyano-7-deazaguanine + 2 NADPH + 3 H(+). The protein operates within tRNA modification; tRNA-queuosine biosynthesis. Catalyzes the NADPH-dependent reduction of 7-cyano-7-deazaguanine (preQ0) to 7-aminomethyl-7-deazaguanine (preQ1). The chain is NADPH-dependent 7-cyano-7-deazaguanine reductase from Helicobacter pylori (strain J99 / ATCC 700824) (Campylobacter pylori J99).